A 66-amino-acid chain; its full sequence is Large ribosomal subunit protein bL33c (66 aa).

It belongs to the bacterial ribosomal protein bL33 family.

The protein localises to the plastid. The protein resides in the chloroplast. The polypeptide is Large ribosomal subunit protein bL33c (Illicium oligandrum (Star anise)).